Reading from the N-terminus, the 809-residue chain is LPS-assembly protein LptD (809 aa).

Residues 1-22 form the signal peptide; sequence MRRALRLLPLPLSIAICLPAMA.

It belongs to the LptD family. As to quaternary structure, component of the lipopolysaccharide transport and assembly complex. Interacts with LptE and LptA.

It is found in the cell outer membrane. Its function is as follows. Together with LptE, is involved in the assembly of lipopolysaccharide (LPS) at the surface of the outer membrane. In Xanthomonas euvesicatoria pv. vesicatoria (strain 85-10) (Xanthomonas campestris pv. vesicatoria), this protein is LPS-assembly protein LptD.